The primary structure comprises 407 residues: MKYPNLLERFLTYVKVNTRSDETSTTTPSTQSQVDFAKNVLIPEMKRVGLENVYYLPNGFAIGTLPANDPSFTRKIGFISHMDTADFNAENIQPQVIENYDGGVIPLGQSGFNLDPADFASLHKYKGQTLITTDGTTLLGADDKSGIAEIMTAIEYLSAHPEIKHGEIRVGFGPDEEIGIGADKFDAEDFDVDFAYTVDGGPLGELQYETFSAAGAELTFQGRNVHPGTAKDQMVNALQLAIDFHSQLPETDRPEKTEGYQGFYHLMNLSGTVEEAHASYIVRDFETEAFENRKAAMKVIAEKMNQELGSERVSLTLKDQYYNMKQVIEKDMTPIHIAKAVMENLDIQPIIEPIRGGTDGSKISFMGIPTPNLFAGGENMHGRFEYVSLETMERAVDTIIGIVSYQD.

Zn(2+) is bound at residue histidine 81. The active site involves aspartate 83. A Zn(2+)-binding site is contributed by aspartate 142. The Proton acceptor role is filled by glutamate 176. Zn(2+) is bound by residues glutamate 177, aspartate 199, and histidine 381.

The protein belongs to the peptidase M20B family. Requires Zn(2+) as cofactor.

The protein resides in the cytoplasm. The enzyme catalyses Release of the N-terminal residue from a tripeptide.. Its function is as follows. Cleaves the N-terminal amino acid of tripeptides. The polypeptide is Peptidase T (Streptococcus sanguinis (strain SK36)).